Consider the following 419-residue polypeptide: UDP-N-acetylglucosamine 1-carboxyvinyltransferase (419 aa).

Phosphoenolpyruvate is bound at residue 22 to 23 (KN). UDP-N-acetyl-alpha-D-glucosamine is bound at residue arginine 93. Cysteine 117 acts as the Proton donor in catalysis. Cysteine 117 is modified (2-(S-cysteinyl)pyruvic acid O-phosphothioketal). UDP-N-acetyl-alpha-D-glucosamine is bound by residues aspartate 306 and isoleucine 328.

It belongs to the EPSP synthase family. MurA subfamily.

The protein localises to the cytoplasm. It carries out the reaction phosphoenolpyruvate + UDP-N-acetyl-alpha-D-glucosamine = UDP-N-acetyl-3-O-(1-carboxyvinyl)-alpha-D-glucosamine + phosphate. Its pathway is cell wall biogenesis; peptidoglycan biosynthesis. Functionally, cell wall formation. Adds enolpyruvyl to UDP-N-acetylglucosamine. This is UDP-N-acetylglucosamine 1-carboxyvinyltransferase from Idiomarina loihiensis (strain ATCC BAA-735 / DSM 15497 / L2-TR).